A 171-amino-acid chain; its full sequence is Large ribosomal subunit protein uL15 (171 aa).

Over residues 1–10 (MKLNEISDNN) the composition is skewed to polar residues. 2 disordered regions span residues 1-44 (MKLN…RSGV) and 150-171 (LPEA…NKAK). Positions 21–35 (RGIGSGKGKTAGRGQ) are enriched in gly residues. The segment covering 157-171 (EQEKKAARREANKAK) has biased composition (basic and acidic residues).

Belongs to the universal ribosomal protein uL15 family. In terms of assembly, part of the 50S ribosomal subunit.

In terms of biological role, binds to the 23S rRNA. The protein is Large ribosomal subunit protein uL15 of Novosphingobium aromaticivorans (strain ATCC 700278 / DSM 12444 / CCUG 56034 / CIP 105152 / NBRC 16084 / F199).